The primary structure comprises 276 residues: Type III pantothenate kinase (276 aa).

Position 18-25 (18-25 (EIGNSRLH)) interacts with ATP. Residues Y116 and 120–123 (GIDR) contribute to the substrate site. D122 functions as the Proton acceptor in the catalytic mechanism. D142 lines the K(+) pocket. T145 is an ATP binding site. T200 contacts substrate.

The protein belongs to the type III pantothenate kinase family. In terms of assembly, homodimer. The cofactor is NH4(+). K(+) is required as a cofactor.

It localises to the cytoplasm. It carries out the reaction (R)-pantothenate + ATP = (R)-4'-phosphopantothenate + ADP + H(+). Its pathway is cofactor biosynthesis; coenzyme A biosynthesis; CoA from (R)-pantothenate: step 1/5. In terms of biological role, catalyzes the phosphorylation of pantothenate (Pan), the first step in CoA biosynthesis. This is Type III pantothenate kinase from Nostoc sp. (strain PCC 7120 / SAG 25.82 / UTEX 2576).